A 193-amino-acid chain; its full sequence is Putative 3-methyladenine DNA glycosylase (193 aa).

It belongs to the DNA glycosylase MPG family.

The polypeptide is Putative 3-methyladenine DNA glycosylase (Francisella tularensis subsp. holarctica (strain FTNF002-00 / FTA)).